Here is a 291-residue protein sequence, read N- to C-terminus: Verruculogen synthase (291 aa).

Tyr-68 is a catalytic residue.

It belongs to the PhyH family. Homodimer. It depends on Fe cation as a cofactor.

The enzyme catalyses fumitremorgin B + 2-oxoglutarate + AH2 + 2 O2 = verruculogen + succinate + A + CO2 + H2O. The protein operates within mycotoxin biosynthesis. Its function is as follows. Verruculogen synthase; part of the gene cluster that mediates the biosynthesis of fumitremorgins, indole alkaloids that carry not only intriguing chemical structures, but also interesting biological and pharmacological activities. The biosynthesis of fumitremorgin-type alkaloids begins by condensation of the two amino acids L-tryptophan and L-proline to brevianamide F, catalyzed by the non-ribosomal peptide synthetase ftmA. Brevianamide F is then prenylated by the prenyltransferase ftmPT1/ftmB in the presence of dimethylallyl diphosphate, resulting in the formation of tryprostatin B. The three cytochrome P450 monooxygenases, ftmP450-1/ftmC, ftmP450-2/ftmE and ftmP450-3/FtmG, are responsible for the conversion of tryprostatin B to 6-hydroxytryprostatin B, tryprostatin A to fumitremorgin C and fumitremorgin C to 12,13-dihydroxyfumitremorgin C, respectively. The putative methyltransferase ftmMT/ftmD is expected for the conversion of 6-hydroxytryprostatin B to tryprostatin A. FtmPT2/FtmH catalyzes the prenylation of 12,13-dihydroxyfumitre-morgin C in the presence of dimethylallyl diphosphate, resulting in the formation of fumitremorgin B. Fumitremorgin B is further converted to verruculogen by ftmOx1/ftmF via the insertion of an endoperoxide bond between the two prenyl moieties. In some fungal species, verruculogen is further converted to fumitremorgin A, but the enzymes involved in this step have not been identified yet. The protein is Verruculogen synthase of Aspergillus fumigatus (Neosartorya fumigata).